A 380-amino-acid polypeptide reads, in one-letter code: Homoserine O-succinyltransferase (380 aa).

One can recognise an AB hydrolase-1 domain in the interval 51–362 (NAVLICHALS…SKHGHDAFLL (312 aa)). Serine 157 (nucleophile) is an active-site residue. Arginine 227 is a substrate binding site. Active-site residues include aspartate 324 and histidine 357. Aspartate 358 contributes to the substrate binding site.

This sequence belongs to the AB hydrolase superfamily. MetX family. As to quaternary structure, homodimer.

It localises to the cytoplasm. It carries out the reaction L-homoserine + succinyl-CoA = O-succinyl-L-homoserine + CoA. Its pathway is amino-acid biosynthesis; L-methionine biosynthesis via de novo pathway; O-succinyl-L-homoserine from L-homoserine: step 1/1. Transfers a succinyl group from succinyl-CoA to L-homoserine, forming succinyl-L-homoserine. This is Homoserine O-succinyltransferase from Cellvibrio japonicus (strain Ueda107) (Pseudomonas fluorescens subsp. cellulosa).